The primary structure comprises 29 residues: ATP synthase subunit 9, mitochondrial (29 aa).

It belongs to the ATPase C chain family. F-type ATPases have 2 components, CF(1) - the catalytic core - and CF(0) - the membrane proton channel. CF(1) has five subunits: alpha(3), beta(3), gamma(1), delta(1), epsilon(1). CF(0) has three main subunits: a, b and c.

Its subcellular location is the mitochondrion membrane. In terms of biological role, mitochondrial membrane ATP synthase (F(1)F(0) ATP synthase or Complex V) produces ATP from ADP in the presence of a proton gradient across the membrane which is generated by electron transport complexes of the respiratory chain. F-type ATPases consist of two structural domains, F(1) - containing the extramembraneous catalytic core and F(0) - containing the membrane proton channel, linked together by a central stalk and a peripheral stalk. During catalysis, ATP synthesis in the catalytic domain of F(1) is coupled via a rotary mechanism of the central stalk subunits to proton translocation. Part of the complex F(0) domain. A homomeric c-ring of probably 10 subunits is part of the complex rotary element. The polypeptide is ATP synthase subunit 9, mitochondrial (ATP9) (Wickerhamomyces pijperi (Yeast)).